A 46-amino-acid polypeptide reads, in one-letter code: Mu-segestritoxin-Sf1f (46 aa).

Intrachain disulfides connect Cys-3-Cys-19, Cys-10-Cys-22, Cys-18-Cys-42, and Cys-24-Cys-40. The segment at 31–33 (RPW) is keys region for toxin activity.

Belongs to the neurotoxin 16 (SFI) family. As to expression, expressed by the venom gland.

It localises to the secreted. In terms of biological role, insecticidal toxin. It inhibits insect voltage-gated sodium channels (Nav) by partially blocking the channel pore in DUM neurons from the American cockroach, not by acting as a gating modifier. The inhibition is only partially reversible after prolonged washout. In vivo, the toxin causes flaccid paralysis followed by death when injected into Heliothis virescens larvae. It also causes uncoordinated movements followed by full paralysis to sheep blowflies (Lucilia cuprina). When the toxin is fused to snowdrop lectin, it is orally active against larvae of the tomato moth (Laconobia oleracea), the rice brown planthopper (Nilaparvata lugens), and the peach-potato aphid (Myzus persicae). This chain is Mu-segestritoxin-Sf1f, found in Segestria florentina (Tube-web spider).